A 232-amino-acid polypeptide reads, in one-letter code: Large ribosomal subunit protein uL1 (232 aa).

Belongs to the universal ribosomal protein uL1 family. In terms of assembly, part of the 50S ribosomal subunit.

Binds directly to 23S rRNA. The L1 stalk is quite mobile in the ribosome, and is involved in E site tRNA release. Functionally, protein L1 is also a translational repressor protein, it controls the translation of the L11 operon by binding to its mRNA. The sequence is that of Large ribosomal subunit protein uL1 from Bordetella petrii (strain ATCC BAA-461 / DSM 12804 / CCUG 43448).